The primary structure comprises 173 residues: MNDLRYPIGQFTYKRPITEEMIDTWIQEIEDLPNELTKAIKDLDQKQLDTPYRVGGWTVRQVVHHVVDSHMNSYIRFKLALTEKNPTIKPYKEEKWAELPDSKLPVDVSLVMLESLHKRWVNLLYSLELEDLEKTFNHPDTGETKLAAAIGLYAWHGRHHTAHITSLRKRLNW.

Residues histidine 65, histidine 156, and histidine 160 each coordinate Zn(2+).

This sequence belongs to the metal hydrolase YfiT family. In terms of assembly, homodimer. Zn(2+) is required as a cofactor.

It localises to the cytoplasm. Possible metal-dependent hydrolase. This is Putative metal-dependent hydrolase BA_2700/GBAA_2700/BAS2515 from Bacillus anthracis.